Here is a 300-residue protein sequence, read N- to C-terminus: NAD kinase (300 aa).

Asp-75 functions as the Proton acceptor in the catalytic mechanism. Residues 75–76, 149–150, Arg-177, Asp-179, 190–195, Ala-214, and Gln-248 each bind NAD(+); these read DG, ND, and TAYALS.

Belongs to the NAD kinase family. A divalent metal cation serves as cofactor.

The protein localises to the cytoplasm. It catalyses the reaction NAD(+) + ATP = ADP + NADP(+) + H(+). Its function is as follows. Involved in the regulation of the intracellular balance of NAD and NADP, and is a key enzyme in the biosynthesis of NADP. Catalyzes specifically the phosphorylation on 2'-hydroxyl of the adenosine moiety of NAD to yield NADP. The chain is NAD kinase from Burkholderia vietnamiensis (strain G4 / LMG 22486) (Burkholderia cepacia (strain R1808)).